The following is a 211-amino-acid chain: Phosphoserine phosphatase 1 (211 aa).

Residue His9 is the Tele-phosphohistidine intermediate of the active site. The active site involves His150.

Belongs to the histidine phosphatase superfamily. Metal-independent phosphoserine phosphatase family. Homodimer. Can also form a heterodimer with PspB.

The catalysed reaction is O-phospho-L-serine + H2O = L-serine + phosphate. It carries out the reaction O-phospho-D-serine + H2O = D-serine + phosphate. It participates in amino-acid biosynthesis; L-serine biosynthesis; L-serine from 3-phospho-D-glycerate: step 3/3. Activity is not inhibited by EDTA in vitro, nor enhanced by the addition of Mg(2+). In terms of biological role, catalyzes the dephosphorylation of L-phosphoserine to serine and inorganic phosphate. Is poorly or not active toward D-phosphoserine, DL-phosphothreonine, 3-phosphoglycerate, para-nitrophenylphosphate, and fructose-6-phosphate. Does not display phosphoglycerate mutase activity. The sequence is that of Phosphoserine phosphatase 1 (pspA) from Hydrogenobacter thermophilus (strain DSM 6534 / IAM 12695 / TK-6).